A 434-amino-acid chain; its full sequence is Glutamate-1-semialdehyde 2,1-aminomutase 1 (434 aa).

K270 bears the N6-(pyridoxal phosphate)lysine mark.

Belongs to the class-III pyridoxal-phosphate-dependent aminotransferase family. HemL subfamily. As to quaternary structure, homodimer. Requires pyridoxal 5'-phosphate as cofactor.

It localises to the cytoplasm. The catalysed reaction is (S)-4-amino-5-oxopentanoate = 5-aminolevulinate. It functions in the pathway porphyrin-containing compound metabolism; protoporphyrin-IX biosynthesis; 5-aminolevulinate from L-glutamyl-tRNA(Glu): step 2/2. This chain is Glutamate-1-semialdehyde 2,1-aminomutase 1, found in Bacillus anthracis (strain A0248).